A 626-amino-acid chain; its full sequence is Polypeptide N-acetylgalactosaminyltransferase 5 (626 aa).

Over 1-11 (MIIFKKKAILK) the chain is Cytoplasmic. Residues 12-31 (VLLLVPVFWICSLIFFAATS) form a helical; Signal-anchor for type II membrane protein membrane-spanning segment. A glycan (N-linked (GlcNAc...) asparagine) is linked at asparagine 32. Over 32–626 (NDSSQIGSNN…AIEHGAKPPS (595 aa)) the chain is Lumenal. 5 cysteine pairs are disulfide-bonded: cysteine 165-cysteine 399, cysteine 390-cysteine 466, cysteine 502-cysteine 521, cysteine 544-cysteine 557, and cysteine 583-cysteine 598. The segment at 174–284 (LPRTSVIICF…EGWMEPLLDR (111 aa)) is catalytic subdomain A. Aspartate 215 and arginine 245 together coordinate substrate. Aspartate 268 is a binding site for Mn(2+). Serine 269 is a substrate binding site. Histidine 270 lines the Mn(2+) pocket. N-linked (GlcNAc...) asparagine glycosylation is present at asparagine 338. The catalytic subdomain B stretch occupies residues 345-407 (PVRSPTMAGG…PCSHVGHVFR (63 aa)). Tryptophan 376 lines the substrate pocket. Residue histidine 404 participates in Mn(2+) binding. Substrate contacts are provided by arginine 407 and tyrosine 412. In terms of domain architecture, Ricin B-type lectin spans 488–610 (AKGEVRNSAV…DDPYQHWKFK (123 aa)).

This sequence belongs to the glycosyltransferase 2 family. GalNAc-T subfamily. Mn(2+) is required as a cofactor.

Its subcellular location is the golgi apparatus membrane. It carries out the reaction L-seryl-[protein] + UDP-N-acetyl-alpha-D-galactosamine = a 3-O-[N-acetyl-alpha-D-galactosaminyl]-L-seryl-[protein] + UDP + H(+). The enzyme catalyses L-threonyl-[protein] + UDP-N-acetyl-alpha-D-galactosamine = a 3-O-[N-acetyl-alpha-D-galactosaminyl]-L-threonyl-[protein] + UDP + H(+). It participates in protein modification; protein glycosylation. Catalyzes the initial reaction in O-linked oligosaccharide biosynthesis, the transfer of an N-acetyl-D-galactosamine residue to a serine or threonine residue on the protein receptor. The sequence is that of Polypeptide N-acetylgalactosaminyltransferase 5 (gly-5) from Caenorhabditis elegans.